Consider the following 376-residue polypeptide: Salivary hyaluronidase (376 aa).

A signal peptide spans 1 to 16 (MNWIFHLFCAVYGIFC). Cystine bridges form between cysteine 32–cysteine 328 and cysteine 203–cysteine 217. Asparagine 36, asparagine 55, asparagine 77, and asparagine 88 each carry an N-linked (GlcNAc...) asparagine glycan. Glutamate 118 functions as the Proton donor in the catalytic mechanism. Residues asparagine 143, asparagine 153, asparagine 181, asparagine 214, asparagine 226, asparagine 248, asparagine 287, asparagine 321, asparagine 336, asparagine 356, and asparagine 371 are each glycosylated (N-linked (GlcNAc...) asparagine).

The protein belongs to the glycosyl hydrolase 56 family. In terms of processing, glycosylated; glycosylation is critical for enzymatic activity. As to expression, female salivary gland (at protein level).

It localises to the secreted. The catalysed reaction is Random hydrolysis of (1-&gt;4)-linkages between N-acetyl-beta-D-glucosamine and D-glucuronate residues in hyaluronate.. Functionally, hydrolyzes high molecular weight hyaluronic acid to produce small oligosaccharides. Up-regulates expression of CSF2, CSF3, LIF, CXCL1, CXCL2 and CXCL8 in cultured human dermal microvascular endothelial cells. Promotes host neutrophil recruitment at the injection site. Its function is as follows. (Microbial infection) Probably promotes Leishmania major infection in the host. The sequence is that of Salivary hyaluronidase from Lutzomyia longipalpis (Sand fly).